The primary structure comprises 1372 residues: DNA-directed RNA polymerase subunit beta (1372 aa).

This sequence belongs to the RNA polymerase beta chain family. The RNAP catalytic core consists of 2 alpha, 1 beta, 1 beta' and 1 omega subunit. When a sigma factor is associated with the core the holoenzyme is formed, which can initiate transcription.

The enzyme catalyses RNA(n) + a ribonucleoside 5'-triphosphate = RNA(n+1) + diphosphate. DNA-dependent RNA polymerase catalyzes the transcription of DNA into RNA using the four ribonucleoside triphosphates as substrates. This is DNA-directed RNA polymerase subunit beta from Psychrobacter arcticus (strain DSM 17307 / VKM B-2377 / 273-4).